We begin with the raw amino-acid sequence, 140 residues long: ATP synthase epsilon chain (140 aa).

The protein belongs to the ATPase epsilon chain family. In terms of assembly, F-type ATPases have 2 components, CF(1) - the catalytic core - and CF(0) - the membrane proton channel. CF(1) has five subunits: alpha(3), beta(3), gamma(1), delta(1), epsilon(1). CF(0) has three main subunits: a, b and c.

The protein localises to the cell inner membrane. Its function is as follows. Produces ATP from ADP in the presence of a proton gradient across the membrane. The chain is ATP synthase epsilon chain from Xanthomonas axonopodis pv. citri (strain 306).